Here is a 160-residue protein sequence, read N- to C-terminus: Non-secretory ribonuclease (160 aa).

Positions 1–27 are cleaved as a signal peptide; the sequence is MVPKLFTSPICLLLLLGLMGVEGSLHA. C-linked (Man) tryptophan glycosylation is present at tryptophan 34. The active-site Proton acceptor is the histidine 42. A glycan (N-linked (GlcNAc...) asparagine) is linked at asparagine 44. 4 disulfide bridges follow: cysteine 50–cysteine 110, cysteine 64–cysteine 122, cysteine 82–cysteine 137, and cysteine 89–cysteine 98. Tyrosine 60 carries the post-translational modification 3'-nitrotyrosine. Substrate is bound at residue 65-69; it reads KNQNT. Residues asparagine 92, asparagine 111, and asparagine 138 are each glycosylated (N-linked (GlcNAc...) asparagine). Catalysis depends on histidine 155, which acts as the Proton donor.

This sequence belongs to the pancreatic ribonuclease family. Interacts with and forms a tight 1:1 complex with RNH1. Dimerization of two such complexes may occur.

It localises to the lysosome. It is found in the cytoplasmic granule. The enzyme catalyses an [RNA] containing cytidine + H2O = an [RNA]-3'-cytidine-3'-phosphate + a 5'-hydroxy-ribonucleotide-3'-[RNA].. It catalyses the reaction an [RNA] containing uridine + H2O = an [RNA]-3'-uridine-3'-phosphate + a 5'-hydroxy-ribonucleotide-3'-[RNA].. Its function is as follows. This is a non-secretory ribonuclease. It is a pyrimidine specific nuclease with a slight preference for U. Cytotoxin and helminthotoxin. Possesses a wide variety of biological activities. In Papio hamadryas (Hamadryas baboon), this protein is Non-secretory ribonuclease (RNASE2).